The primary structure comprises 398 residues: Serine/threonine-protein kinase 32A (398 aa).

Gly2 carries the N-myristoyl glycine lipid modification. The 259-residue stretch at 23–281 (FEILRAIGKG…LTDIQNFPYM (259 aa)) folds into the Protein kinase domain. Residues 29–37 (IGKGSFGKV) and Lys52 contribute to the ATP site. Asp146 functions as the Proton acceptor in the catalytic mechanism. The segment at 379–398 (ALEQTKNNTEEEEDGQNNNL) is disordered. Residues 388 to 398 (EEEEDGQNNNL) show a composition bias toward acidic residues.

Belongs to the protein kinase superfamily. Ser/Thr protein kinase family. Mg(2+) is required as a cofactor.

It localises to the cell membrane. The enzyme catalyses L-seryl-[protein] + ATP = O-phospho-L-seryl-[protein] + ADP + H(+). It carries out the reaction L-threonyl-[protein] + ATP = O-phospho-L-threonyl-[protein] + ADP + H(+). This is Serine/threonine-protein kinase 32A from Mus musculus (Mouse).